A 635-amino-acid chain; its full sequence is Threonine--tRNA ligase (635 aa).

The TGS domain occupies 1–61 (MIKITLKDGK…HKDSSLEILT (61 aa)). Positions 242–532 (DHRKLGKELD…LIEQYAGAFP (291 aa)) are catalytic. The Zn(2+) site is built by C333, H384, and H509.

The protein belongs to the class-II aminoacyl-tRNA synthetase family. Homodimer. The cofactor is Zn(2+).

The protein localises to the cytoplasm. The enzyme catalyses tRNA(Thr) + L-threonine + ATP = L-threonyl-tRNA(Thr) + AMP + diphosphate + H(+). Catalyzes the attachment of threonine to tRNA(Thr) in a two-step reaction: L-threonine is first activated by ATP to form Thr-AMP and then transferred to the acceptor end of tRNA(Thr). Also edits incorrectly charged L-seryl-tRNA(Thr). This is Threonine--tRNA ligase from Clostridium botulinum (strain ATCC 19397 / Type A).